Consider the following 388-residue polypeptide: S-adenosylmethionine synthase (388 aa).

Position 17 (His17) interacts with ATP. Asp19 is a binding site for Mg(2+). Glu45 provides a ligand contact to K(+). L-methionine contacts are provided by Glu58 and Gln101. The tract at residues 101 to 111 (QSPDIGQGVDT) is flexible loop. ATP is bound by residues 160-162 (DGK), 226-227 (RF), Asp235, 241-242 (RK), Ala258, and Lys262. Asp235 provides a ligand contact to L-methionine. Residue Lys266 participates in L-methionine binding.

This sequence belongs to the AdoMet synthase family. In terms of assembly, homotetramer; dimer of dimers. Mg(2+) is required as a cofactor. Requires K(+) as cofactor.

It localises to the cytoplasm. The enzyme catalyses L-methionine + ATP + H2O = S-adenosyl-L-methionine + phosphate + diphosphate. It functions in the pathway amino-acid biosynthesis; S-adenosyl-L-methionine biosynthesis; S-adenosyl-L-methionine from L-methionine: step 1/1. Its function is as follows. Catalyzes the formation of S-adenosylmethionine (AdoMet) from methionine and ATP. The overall synthetic reaction is composed of two sequential steps, AdoMet formation and the subsequent tripolyphosphate hydrolysis which occurs prior to release of AdoMet from the enzyme. The polypeptide is S-adenosylmethionine synthase (Anaeromyxobacter sp. (strain K)).